A 133-amino-acid polypeptide reads, in one-letter code: Salivary cystatin-L (133 aa).

The N-terminal stretch at 1-19 (MTSSFALVLLLGGVAVCVA) is a signal peptide. The region spanning 30–117 (ANHQANPEFL…HRTCTTVVFE (88 aa)) is the Cystatin domain. Disulfide bonds link Cys89–Cys100 and Cys111–Cys130.

This sequence belongs to the cystatin family. As to quaternary structure, monomer. Can form homodimers in vitro, but probably not in vivo. Homodimers are predicted to be inactive; dimerization disrupts the interaction with target proteases.

It is found in the secreted. In terms of biological role, inhibitor of cysteine proteinases. Inhibits host immune responses via its inhibition of host cathepsins. Contributes to the suppression of the host's immune response to tick salivary proteins and is important for successful feeding on hosts. Inhibits differentiation of host dendritic cells. Inhibits proliferation of host T-cells in response to antigen stimulus. Down-regulates TLR2-mediated host responses to infection by B.burgdorferi and the production of the chemokine CCL3 by host dendritic cells. Down-regulates host responses to infection by B.burgdorferi and the production of IFNB1 by host dendritic cells. Down-regulates IL1B production by host mast cells, and this then leads to impaired activation of IL1R1, resulting in decreased IL9 production. Inhibits host inflammatory reactions and recruitment of host neutrophils. Inhibits papain and cathepsin L (CTSL) (in vitro). Inhibits cathepsin S (CTSS) (in vitro). Inhibits CTSV and CTSC, but to a lesser degree (in vitro). The chain is Salivary cystatin-L from Ixodes scapularis (Black-legged tick).